Reading from the N-terminus, the 216-residue chain is ATP-dependent Clp protease proteolytic subunit 1 (216 aa).

Ser-119 functions as the Nucleophile in the catalytic mechanism. Residue His-144 is part of the active site.

This sequence belongs to the peptidase S14 family. Fourteen ClpP subunits assemble into 2 heptameric rings which stack back to back to give a disk-like structure with a central cavity, resembling the structure of eukaryotic proteasomes.

It is found in the cytoplasm. It catalyses the reaction Hydrolysis of proteins to small peptides in the presence of ATP and magnesium. alpha-casein is the usual test substrate. In the absence of ATP, only oligopeptides shorter than five residues are hydrolyzed (such as succinyl-Leu-Tyr-|-NHMec, and Leu-Tyr-Leu-|-Tyr-Trp, in which cleavage of the -Tyr-|-Leu- and -Tyr-|-Trp bonds also occurs).. Its function is as follows. Cleaves peptides in various proteins in a process that requires ATP hydrolysis. Has a chymotrypsin-like activity. Plays a major role in the degradation of misfolded proteins. This is ATP-dependent Clp protease proteolytic subunit 1 from Cutibacterium acnes (strain DSM 16379 / KPA171202) (Propionibacterium acnes).